Reading from the N-terminus, the 157-residue chain is Transcriptional repressor NrdR (157 aa).

A zinc finger spans residues 3 to 34 (CPHCHQNSSRVIDSRPTDEGRVIRRRRECENC). The ATP-cone domain occupies 49–139 (LLVIKKNGTR…VYRQFKDMNV (91 aa)).

It belongs to the NrdR family. Requires Zn(2+) as cofactor.

Functionally, negatively regulates transcription of bacterial ribonucleotide reductase nrd genes and operons by binding to NrdR-boxes. This Latilactobacillus sakei subsp. sakei (strain 23K) (Lactobacillus sakei subsp. sakei) protein is Transcriptional repressor NrdR.